A 355-amino-acid chain; its full sequence is Methylthioribose-1-phosphate isomerase (355 aa).

Substrate is bound by residues 47-49 (RGA), arginine 91, and glutamine 199. The Proton donor role is filled by aspartate 240. A substrate-binding site is contributed by 250 to 251 (NK).

The protein belongs to the eIF-2B alpha/beta/delta subunits family. MtnA subfamily.

The catalysed reaction is 5-(methylsulfanyl)-alpha-D-ribose 1-phosphate = 5-(methylsulfanyl)-D-ribulose 1-phosphate. It participates in amino-acid biosynthesis; L-methionine biosynthesis via salvage pathway; L-methionine from S-methyl-5-thio-alpha-D-ribose 1-phosphate: step 1/6. Functionally, catalyzes the interconversion of methylthioribose-1-phosphate (MTR-1-P) into methylthioribulose-1-phosphate (MTRu-1-P). The sequence is that of Methylthioribose-1-phosphate isomerase from Oleidesulfovibrio alaskensis (strain ATCC BAA-1058 / DSM 17464 / G20) (Desulfovibrio alaskensis).